The sequence spans 188 residues: Ribosome-recycling factor (188 aa).

Belongs to the RRF family.

The protein resides in the cytoplasm. Its function is as follows. Responsible for the release of ribosomes from messenger RNA at the termination of protein biosynthesis. May increase the efficiency of translation by recycling ribosomes from one round of translation to another. The polypeptide is Ribosome-recycling factor (Caulobacter vibrioides (strain NA1000 / CB15N) (Caulobacter crescentus)).